We begin with the raw amino-acid sequence, 808 residues long: DNA ligase (808 aa).

Residues 1-30 form a disordered region; sequence MSISDDISPVPPAPVSEPNAGQDAGQDAAP. The span at 18-30 shows a compositional bias: low complexity; that stretch reads PNAGQDAGQDAAP. NAD(+) contacts are provided by residues 61-65, 110-111, and Asp141; these read DAEYD and SL. The N6-AMP-lysine intermediate role is filled by Lys143. Residues Arg164, Glu202, Lys334, and Lys358 each coordinate NAD(+). Residues Cys453, Cys456, Cys471, and Cys476 each coordinate Zn(2+). Residues 644–733 form the BRCT domain; it reads EGSGPLAGLR…GGDVPEDGDG (90 aa). The tract at residues 720–808 is disordered; sequence LEGRGGDVPE…PRKKDQHSLL (89 aa). Positions 727–742 are enriched in acidic residues; sequence VPEDGDGAPGNEDEAP. Low complexity predominate over residues 746–773; that stretch reads ADVPAAPEVLADAPAAISADASSGVAPG. Residues 779-792 are compositionally biased toward basic and acidic residues; that stretch reads DRADMTDRTVRTDS.

It belongs to the NAD-dependent DNA ligase family. LigA subfamily. Mg(2+) serves as cofactor. Mn(2+) is required as a cofactor.

It catalyses the reaction NAD(+) + (deoxyribonucleotide)n-3'-hydroxyl + 5'-phospho-(deoxyribonucleotide)m = (deoxyribonucleotide)n+m + AMP + beta-nicotinamide D-nucleotide.. Functionally, DNA ligase that catalyzes the formation of phosphodiester linkages between 5'-phosphoryl and 3'-hydroxyl groups in double-stranded DNA using NAD as a coenzyme and as the energy source for the reaction. It is essential for DNA replication and repair of damaged DNA. In Nitratidesulfovibrio vulgaris (strain DSM 19637 / Miyazaki F) (Desulfovibrio vulgaris), this protein is DNA ligase.